The chain runs to 525 residues: ATP-dependent RNA helicase dbp8 (525 aa).

Residues 1–29 (MAPLSTPESISREISVSSDASADESTSLD) show a composition bias toward polar residues. Residues 1–76 (MAPLSTPESI…TNATSSRKDD (76 aa)) form a disordered region. A Q motif motif is present at residues 95-123 (NSFKALNVAPWLVGSLTTMAVRKPTAIQR). Positions 126–305 (IPEILKGRDC…SMPQTPGKPP (180 aa)) constitute a Helicase ATP-binding domain. 139–146 (SRTGSGKT) is a binding site for ATP. A DEAD box motif is present at residues 248 to 251 (DEAD). In terms of domain architecture, Helicase C-terminal spans 337-484 (AFLHVLLSTE…EYEEEGVNLE (148 aa)).

The protein belongs to the DEAD box helicase family. DDX49/DBP8 subfamily.

Its subcellular location is the nucleus. It localises to the nucleolus. The catalysed reaction is ATP + H2O = ADP + phosphate + H(+). Functionally, ATP-binding RNA helicase involved in 40S ribosomal subunit biogenesis and is required for the normal formation of 18S rRNAs through pre-rRNA processing at A0, A1 and A2 sites. Required for vegetative growth. The sequence is that of ATP-dependent RNA helicase dbp8 (dbp8) from Emericella nidulans (strain FGSC A4 / ATCC 38163 / CBS 112.46 / NRRL 194 / M139) (Aspergillus nidulans).